Consider the following 240-residue polypeptide: Ribonuclease PH (240 aa).

Phosphate-binding positions include Arg87 and 125–127; that span reads GTR.

It belongs to the RNase PH family. Homohexameric ring arranged as a trimer of dimers.

The enzyme catalyses tRNA(n+1) + phosphate = tRNA(n) + a ribonucleoside 5'-diphosphate. Its function is as follows. Phosphorolytic 3'-5' exoribonuclease that plays an important role in tRNA 3'-end maturation. Removes nucleotide residues following the 3'-CCA terminus of tRNAs; can also add nucleotides to the ends of RNA molecules by using nucleoside diphosphates as substrates, but this may not be physiologically important. Probably plays a role in initiation of 16S rRNA degradation (leading to ribosome degradation) during starvation. The polypeptide is Ribonuclease PH (Stutzerimonas stutzeri (strain A1501) (Pseudomonas stutzeri)).